The primary structure comprises 396 residues: 1-deoxy-D-xylulose 5-phosphate reductoisomerase (396 aa).

Residues Thr13, Gly14, Ser15, Ile16, and Asn127 each coordinate NADPH. Residue Lys128 coordinates 1-deoxy-D-xylulose 5-phosphate. Glu129 contributes to the NADPH binding site. Asp153 is a Mn(2+) binding site. The 1-deoxy-D-xylulose 5-phosphate site is built by Ser154, Glu155, Ser184, and His207. Glu155 lines the Mn(2+) pocket. Gly213 lines the NADPH pocket. 1-deoxy-D-xylulose 5-phosphate contacts are provided by Ser220, Asn225, Lys226, and Glu229. Glu229 contacts Mn(2+).

This sequence belongs to the DXR family. It depends on Mg(2+) as a cofactor. The cofactor is Mn(2+).

The enzyme catalyses 2-C-methyl-D-erythritol 4-phosphate + NADP(+) = 1-deoxy-D-xylulose 5-phosphate + NADPH + H(+). The protein operates within isoprenoid biosynthesis; isopentenyl diphosphate biosynthesis via DXP pathway; isopentenyl diphosphate from 1-deoxy-D-xylulose 5-phosphate: step 1/6. Functionally, catalyzes the NADPH-dependent rearrangement and reduction of 1-deoxy-D-xylulose-5-phosphate (DXP) to 2-C-methyl-D-erythritol 4-phosphate (MEP). This chain is 1-deoxy-D-xylulose 5-phosphate reductoisomerase, found in Pseudomonas fluorescens (strain Pf0-1).